The chain runs to 378 residues: Alcohol dehydrogenase 1 (378 aa).

Cys48 is a binding site for Zn(2+). Residue 49–53 (HTDVL) participates in NAD(+) binding. Residues His69, Cys99, Cys102, Cys105, Cys113, and Cys177 each coordinate Zn(2+). Residues 202–207 (GIGTVG), Asp226, Lys231, 274–276 (TGV), 297–299 (IGA), and 321–323 (TAF) contribute to the NAD(+) site.

This sequence belongs to the zinc-containing alcohol dehydrogenase family. Class-IV subfamily. As to quaternary structure, homodimer. It depends on Zn(2+) as a cofactor. Present in non-glandular trichome cells.

Its subcellular location is the nucleus. It localises to the cytoplasm. The protein resides in the cytosol. It catalyses the reaction (+)-artemisinic alcohol + NAD(+) = (+)-artemisinic aldehyde + NADH + H(+). Its pathway is sesquiterpene biosynthesis. Involved in the biosynthesis of the antimalarial endoperoxide artemisinin. Catalyzes the conversion of artemisinic alcohol into artemisinic aldehyde. This chain is Alcohol dehydrogenase 1, found in Artemisia annua (Sweet wormwood).